The following is a 189-amino-acid chain: Thymidine kinase (189 aa).

Residues 9-16 (GTMNSGKT) and 85-88 (DECQ) each bind ATP. Glutamate 86 functions as the Proton acceptor in the catalytic mechanism. Zn(2+) is bound by residues cysteine 143, cysteine 146, cysteine 180, and histidine 183.

This sequence belongs to the thymidine kinase family. In terms of assembly, homotetramer.

Its subcellular location is the cytoplasm. It catalyses the reaction thymidine + ATP = dTMP + ADP + H(+). The protein is Thymidine kinase of Streptococcus agalactiae serotype Ia (strain ATCC 27591 / A909 / CDC SS700).